The primary structure comprises 495 residues: Transcription termination/antitermination protein NusA (495 aa).

One can recognise an S1 motif domain in the interval glycine 135–serine 200. The region spanning lysine 302–aspartate 368 is the KH domain. 2 consecutive repeat copies span residues aspartate 364–leucine 414 and glycine 439–cysteine 489. Residues aspartate 364–cysteine 489 form a 2 X 51 AA approximate repeats region.

Belongs to the NusA family. In terms of assembly, monomer. Binds directly to the core enzyme of the DNA-dependent RNA polymerase and to nascent RNA.

Its subcellular location is the cytoplasm. Its function is as follows. Participates in both transcription termination and antitermination. The chain is Transcription termination/antitermination protein NusA from Shigella flexneri.